The primary structure comprises 174 residues: Chaperonin-like RBCX protein 1, chloroplastic (174 aa).

The transit peptide at 1–45 (MESSSSLLHHSYLSYLNPKFGKRPLVSYPLMQSSRKCKQTRICSN) directs the protein to the chloroplast.

This sequence belongs to the RbcX family. As to quaternary structure, homodimer. Interacts with rbcL, atpB and THI1.

The protein resides in the plastid. Its subcellular location is the chloroplast. Chaperone involved in RuBisCO assembly process. This chain is Chaperonin-like RBCX protein 1, chloroplastic, found in Arabidopsis thaliana (Mouse-ear cress).